The primary structure comprises 469 residues: Secreted triacylglycerol lipase LIP3 (469 aa).

The signal sequence occupies residues 1–21 (MVSLLWKFTLLCLFLLACTSA). Cys-121 and Cys-292 are joined by a disulfide. Catalysis depends on Ser-205, which acts as the Nucleophile. Asn-238 carries an N-linked (GlcNAc...) asparagine glycan. Active-site residues include Asp-352 and His-386.

Belongs to the AB hydrolase superfamily. Lipase family. Class Lip subfamily.

The protein resides in the secreted. It carries out the reaction a triacylglycerol + H2O = a diacylglycerol + a fatty acid + H(+). It catalyses the reaction a monoacylglycerol + H2O = glycerol + a fatty acid + H(+). The catalysed reaction is a diacylglycerol + H2O = a monoacylglycerol + a fatty acid + H(+). Functionally, secreted lipase that hydrolyzes acylglycerol lipids such as triacylglycerols and consequently releases free fatty acid. Generates free oleic acid from the substrates mono- and diolein and hydrolyzes triolein in significant amounts. Due to an absence of fatty acid synthase genes in Malassezia species, secretory lipases are essential for the yeast to generate free fatty acids from degradation of sebum and assimilate them as lipid sources for growth. Plays an essential role at the pathogen-host interface during disease progression. Performs also the reverse reaction to build diacyl- and triacyl- glycerols from monoacylglycerols. This is Secreted triacylglycerol lipase LIP3 from Malassezia restricta (strain ATCC 96810 / NBRC 103918 / CBS 7877) (Seborrheic dermatitis infection agent).